The chain runs to 163 residues: Lipoprotein signal peptidase (163 aa).

Transmembrane regions (helical) follow at residues 9-29, 42-62, 67-87, and 93-113; these read AWPW…SKYL, ILPF…SFLG, WQII…ILWL, and SEIM…GNFI. Active-site residues include aspartate 123 and aspartate 141. A helical transmembrane segment spans residues 137–157; that stretch reads FNVADSAICVGVFLLIVYMLL.

Belongs to the peptidase A8 family.

It localises to the cell inner membrane. It carries out the reaction Release of signal peptides from bacterial membrane prolipoproteins. Hydrolyzes -Xaa-Yaa-Zaa-|-(S,diacylglyceryl)Cys-, in which Xaa is hydrophobic (preferably Leu), and Yaa (Ala or Ser) and Zaa (Gly or Ala) have small, neutral side chains.. It functions in the pathway protein modification; lipoprotein biosynthesis (signal peptide cleavage). Its function is as follows. This protein specifically catalyzes the removal of signal peptides from prolipoproteins. The polypeptide is Lipoprotein signal peptidase (Coxiella burnetii (strain Dugway 5J108-111)).